Consider the following 547-residue polypeptide: Probable high-affinity hexose transporter ght8, mitochondrial (547 aa).

A mitochondrion-targeting transit peptide spans 1-21 (MGKTLTIVMLVFVSMAGWMFG). At 22 to 86 (ADTGSIGGIT…SPLMDRIGKR (65 aa)) the chain is on the mitochondrial intermembrane side. A helical transmembrane segment spans residues 87–107 (VSIMFWTIVYLIGIILQVTAV). The Cytoplasmic segment spans residues 108-112 (PSWVQ). A helical membrane pass occupies residues 113–133 (IMVAKIWTGLAIGALSVLAPG). Over 134–144 (FQSEVAPATLR) the chain is Mitochondrial intermembrane. A helical membrane pass occupies residues 145-165 (GTIVTTYQLAVTGGIFIAACI). At 166-179 (NMGTHKLHKTAQWR) the chain is on the cytoplasmic side. Residues 180-200 (VSMGINLLWGIIMFIGISFLP) traverse the membrane as a helical segment. At 201-304 (ESPRYLIAIG…TGMNSPYLSA (104 aa)) the chain is on the mitochondrial intermembrane side. Residues 305 to 325 (LILDAVNFGCTFGGLFVLEFF) traverse the membrane as a helical segment. Residues 326 to 328 (GRR) are Cytoplasmic-facing. The chain crosses the membrane as a helical span at residues 329 to 349 (MPLIIGGVWQSITFFIYAAVG). Residues 350-363 (NRALTRKNGTSNHR) are Mitochondrial intermembrane-facing. The helical transmembrane segment at 364–384 (AGAVMIVFSCLFIFSFAQTWG) threads the bilayer. Topologically, residues 385-404 (PAAYVIVGESYPIRYRSKCA) are cytoplasmic. The chain crosses the membrane as a helical span at residues 405 to 425 (AVATTGNWLWGFLITFFTPFI). Residues 426-432 (SDSIGFK) are Mitochondrial intermembrane-facing. Residues 433–453 (YGYIFAACNLCAACIIFLFAH) form a helical membrane-spanning segment. The Cytoplasmic portion of the chain corresponds to 454–547 (ETKGLTLEEI…NYVDEQDRYA (94 aa)). The interval 482–547 (GQAAKQQQEV…NYVDEQDRYA (66 aa)) is disordered. The segment covering 517–529 (TSSNDITSSTSSS) has biased composition (low complexity). Ser-519 is subject to Phosphoserine. 2 positions are modified to phosphothreonine: Thr-523 and Thr-526. Phosphoserine occurs at positions 527, 528, 529, and 537.

The protein belongs to the major facilitator superfamily. Sugar transporter (TC 2.A.1.1) family.

It localises to the mitochondrion membrane. In Schizosaccharomyces pombe (strain 972 / ATCC 24843) (Fission yeast), this protein is Probable high-affinity hexose transporter ght8, mitochondrial (ght8).